The sequence spans 223 residues: Exosome complex component RRP46 (223 aa).

This sequence belongs to the RNase PH family. In terms of assembly, component of the RNA exosome complex. Specifically part of the catalytically inactive RNA exosome core complex (Exo-9) which may associate with the catalytic subunits RRP6 and DIS3 in cytoplasmic- and nuclear-specific RNA exosome complex forms. Exo-9 is formed by a hexameric base ring of RNase PH domain-containing subunits and a cap ring consisting of CSL4, RRP4 and RRP40.

The protein localises to the cytoplasm. It localises to the nucleus. Its subcellular location is the nucleolus. Functionally, non-catalytic component of the RNA exosome complex which has 3'-&gt;5' exoribonuclease activity and participates in a multitude of cellular RNA processing and degradation events. In the nucleus, the RNA exosome complex is involved in proper maturation of stable RNA species such as rRNA, snRNA and snoRNA, in the elimination of RNA processing by-products and non-coding 'pervasive' transcripts, such as antisense RNA species and cryptic unstable transcripts (CUTs), and of mRNAs with processing defects, thereby limiting or excluding their export to the cytoplasm. In the cytoplasm, the RNA exosome complex is involved in general mRNA turnover and in RNA surveillance pathways, preventing translation of aberrant mRNAs. The catalytic inactive RNA exosome core complex of 9 subunits (Exo-9) is proposed to play a pivotal role in the binding and presentation of RNA for ribonucleolysis, and to serve as a scaffold for the association with catalytic subunits and accessory proteins or complexes. RRP46 is part of the hexameric ring of RNase PH domain-containing subunits proposed to form a central channel which threads RNA substrates for degradation. The protein is Exosome complex component RRP46 (RRP46) of Saccharomyces cerevisiae (strain ATCC 204508 / S288c) (Baker's yeast).